A 197-amino-acid chain; its full sequence is Ribosome maturation factor RimM (197 aa).

A PRC barrel domain is found at 92-164 (DEGWYEHELV…YILVTPPPGL (73 aa)). The disordered stretch occupies residues 167-197 (INVEDSGETSDAGESGPGEAEPGKAEAGDNA). The span at 176–186 (SDAGESGPGEA) shows a compositional bias: low complexity. The segment covering 187 to 197 (EPGKAEAGDNA) has biased composition (basic and acidic residues).

This sequence belongs to the RimM family. In terms of assembly, binds ribosomal protein uS19.

It localises to the cytoplasm. An accessory protein needed during the final step in the assembly of 30S ribosomal subunit, possibly for assembly of the head region. Essential for efficient processing of 16S rRNA. May be needed both before and after RbfA during the maturation of 16S rRNA. It has affinity for free ribosomal 30S subunits but not for 70S ribosomes. The chain is Ribosome maturation factor RimM from Arthrobacter sp. (strain FB24).